Reading from the N-terminus, the 1220-residue chain is Limbin (1220 aa).

The N-terminal stretch at 1–29 (MGATGPTGAGGRATWVLAGNILAAALVLG) is a signal peptide. At 30-210 (SGPRALPPSF…VLPNHGLHAA (181 aa)) the chain is on the extracellular side. The interval 38 to 59 (SFPALGPGSPSRPGPAGPWASS) is disordered. N-linked (GlcNAc...) asparagine glycans are attached at residues N100, N109, and N130. The chain crosses the membrane as a helical span at residues 211–231 (GFIAAFLISLLLTVAALFFLA). Residues 232–1220 (RGRCLQGGML…KKANRALGLD (989 aa)) are Cytoplasmic-facing. Coiled-coil stretches lie at residues 355-404 (EEYE…SAAE), 563-644 (KQKL…AALD), 854-875 (GELL…AESL), and 920-1005 (QILE…VREE).

As to quaternary structure, component of the EvC complex composed of EFCAB7, IQCE, EVC2 and EVC; built from two subcomplexes, EVC2:EVC and EFCAB7:IQCE. Interacts with EVC. Interacts (via N-terminal end) with EFCAB7. Interacts (via N-terminal end) with IQCE. In terms of tissue distribution, expressed in long and cranial bones, kidney and heart. Strongly expressed in proliferating chondrocytes, osteoblasts and osteoclasts.

The protein resides in the cell membrane. It localises to the cytoplasm. The protein localises to the cytoskeleton. It is found in the cilium basal body. Its subcellular location is the cell projection. The protein resides in the cilium. It localises to the cilium membrane. The protein localises to the nucleus. Component of the EvC complex that positively regulates ciliary Hedgehog (Hh) signaling. Plays a critical role in bone formation and skeletal development. May be involved in early embryonic morphogenesis. This Mus musculus (Mouse) protein is Limbin (Evc2).